The primary structure comprises 1202 residues: Phospholipid-transporting ATPase 10 (1202 aa).

The Cytoplasmic segment spans residues 1-73 (MAGPSRRRRR…STKYTVASFF (73 aa)). A helical membrane pass occupies residues 74–95 (PKSLFEQFRRVANFYFLVTGIL). Over 96-99 (SLTD) the chain is Extracellular. Residues 100-122 (LSPYGAVSALLPLALVISATMVK) traverse the membrane as a helical segment. Over 123–305 (EGIEDWRRKQ…SRIERTMDKI (183 aa)) the chain is Cytoplasmic. A helical transmembrane segment spans residues 306 to 327 (IYLMFGLVFLMSFVGSIIFGVE). Over 328 to 364 (TREDKVKNGRTERWYLKPDDADIFFDPERAPMAAIYH) the chain is Extracellular. Residues 365 to 382 (FFTATMLYSYFIPISLYV) traverse the membrane as a helical segment. At 383 to 920 (SIEIVKVLQS…HGHWCYSRIA (538 aa)) the chain is on the cytoplasmic side. The 4-aspartylphosphate intermediate role is filled by Asp430. 2 residues coordinate Mg(2+): Asp865 and Asp869. A helical transmembrane segment spans residues 921-940 (SMICYFFYKNITFGVTVFLY). The Extracellular segment spans residues 941–954 (EAYTSFSGQPAYND). The chain crosses the membrane as a helical span at residues 955-974 (WFLSLFNVFFSSLPVIALGV). At 975–1004 (FDQDVSARFCYKFPLLYQEGVQNILFSWKR) the chain is on the cytoplasmic side. The chain crosses the membrane as a helical span at residues 1005 to 1027 (IIGWMFNGFISALAIFFLCKESL). The Extracellular segment spans residues 1028–1040 (KHQLFDPDGKTAG). The helical transmembrane segment at 1041–1063 (REILGGTMYTCVVWVVNLQMALS) threads the bilayer. At 1064–1069 (ISYFTW) the chain is on the cytoplasmic side. The helical transmembrane segment at 1070 to 1090 (VQHIVIWGSIAFWYIFLMIYG) threads the bilayer. Residues 1091 to 1107 (AMTPSFSTDAYMVFLEA) are Extracellular-facing. The helical transmembrane segment at 1108–1132 (LAPAPSYWLTTLFVMIFALIPYFVY) threads the bilayer. Over 1133–1202 (KSVQMRFFPK…DQIYKDLVGV (70 aa)) the chain is Cytoplasmic.

It belongs to the cation transport ATPase (P-type) (TC 3.A.3) family. Type IV subfamily.

It localises to the cell membrane. It catalyses the reaction ATP + H2O + phospholipidSide 1 = ADP + phosphate + phospholipidSide 2.. Functionally, involved in transport of phospholipids. The protein is Phospholipid-transporting ATPase 10 of Arabidopsis thaliana (Mouse-ear cress).